The chain runs to 404 residues: L-cysteine:1D-myo-inositol 2-amino-2-deoxy-alpha-D-glucopyranoside ligase (404 aa).

Cys47 contacts Zn(2+). L-cysteinyl-5'-AMP is bound by residues 47–50, Thr62, and 85–87; these read CGIT and NIT. Residues 49–59 carry the 'HIGH' region motif; sequence ITPYDSTHLGH. Residues 188–193 carry the 'ERGGDP' region motif; the sequence is ERGGDP. Trp228 contacts L-cysteinyl-5'-AMP. Cys232 contacts Zn(2+). An L-cysteinyl-5'-AMP-binding site is contributed by 250 to 252; the sequence is GSD. His257 contributes to the Zn(2+) binding site. Residue Ile284 participates in L-cysteinyl-5'-AMP binding. Residues 290-294 carry the 'KMSKS' region motif; it reads KMSKS.

This sequence belongs to the class-I aminoacyl-tRNA synthetase family. MshC subfamily. Monomer. The cofactor is Zn(2+).

The enzyme catalyses 1D-myo-inositol 2-amino-2-deoxy-alpha-D-glucopyranoside + L-cysteine + ATP = 1D-myo-inositol 2-(L-cysteinylamino)-2-deoxy-alpha-D-glucopyranoside + AMP + diphosphate + H(+). In terms of biological role, catalyzes the ATP-dependent condensation of GlcN-Ins and L-cysteine to form L-Cys-GlcN-Ins. This Corynebacterium striatum protein is L-cysteine:1D-myo-inositol 2-amino-2-deoxy-alpha-D-glucopyranoside ligase.